A 425-amino-acid polypeptide reads, in one-letter code: MTKALDGVRVLDFTHVQSGPTCTQLLAWFGADVIKVERPGSGDITRGQLQDIPKVDSLYFTMLNHNKRSITLDTKNPKGKEVLTALIRTCDVLVENFGPGVLDRMGFTWEKIQEINPRMIVASIKGFGPGPYEDCKVYENVAQCTGGAASTTGFREGLPLVTGAQIGDSGTGLHLALGIVTALYQRHHTGRGQRVTAAMQDGVLNLCRVKLRDQQRLDHGPLKEYSQFGEGIPFGDAVPRAGNDSGGGQPGRILKCKGWEQDPNAYIYVITQAPVWEKICDVIGETGWKMHPDYATPPARLSRLNEIFARIEQWTMTKTKFEAMEILNADDIPCGPILSMKELAEDQSLRATGTIVEVDHPTRGKYLSVGNPIKLSDSPTEVKRSPLLGEHTDEILRDVLGYSDAHVAEIHDSGATAPPRKQAAE.

CoA contacts are provided by residues 17–18 (QS), Arg38, 72–75 (LDTK), 96–98 (NFG), Arg104, and 136–139 (KVYE). Asp168 functions as the Nucleophile in the catalytic mechanism. 247 to 249 (GGQ) provides a ligand contact to substrate.

The protein belongs to the CoA-transferase III family. Frc subfamily. In terms of assembly, homodimer.

It carries out the reaction formyl-CoA + oxalate = oxalyl-CoA + formate. It functions in the pathway metabolic intermediate degradation; oxalate degradation; CO(2) and formate from oxalate: step 1/2. In terms of biological role, involved in the catabolism of oxalate and in the adapatation to low pH via the induction of the oxalate-dependent acid tolerance response (ATR). Catalyzes the transfer of the CoA moiety from formyl-CoA to oxalate. The sequence is that of Formyl-CoA:oxalate CoA-transferase from Rhodopseudomonas palustris (strain TIE-1).